The primary structure comprises 113 residues: Putative pterin-4-alpha-carbinolamine dehydratase (113 aa).

It belongs to the pterin-4-alpha-carbinolamine dehydratase family.

The enzyme catalyses (4aS,6R)-4a-hydroxy-L-erythro-5,6,7,8-tetrahydrobiopterin = (6R)-L-erythro-6,7-dihydrobiopterin + H2O. This is Putative pterin-4-alpha-carbinolamine dehydratase from Nitrosococcus oceani (strain ATCC 19707 / BCRC 17464 / JCM 30415 / NCIMB 11848 / C-107).